Here is a 428-residue protein sequence, read N- to C-terminus: Zinc metalloproteinase nas-27 (428 aa).

A signal peptide spans 1–17; sequence MQILPIFFPLLITSLHA. Positions 18-57 are excised as a propeptide; that stretch reads IPRGRRAVRNRNEGDINSLVGVGQYLYQGDIAVVKSRARR. One can recognise a Peptidase M12A domain in the interval 58-255; that stretch reads AVIRQKHKKW…SRMNVLYNCH (198 aa). 6 cysteine pairs are disulfide-bonded: Cys-99-Cys-254, Cys-120-Cys-141, Cys-258-Cys-276, Cys-281-Cys-290, Cys-306-Cys-339, and Cys-366-Cys-386. Residue His-150 coordinates Zn(2+). Glu-151 is an active-site residue. Zn(2+) contacts are provided by His-154 and His-160. N-linked (GlcNAc...) asparagine glycosylation occurs at Asn-181. The EGF-like domain maps to 250–291; that stretch reads VLYNCHERCANTLNRCQQGGYPAPSDCSQCVCPDGFGGNFCE. The 123-residue stretch at 306–428 folds into the CUB domain; it reads CGGVLWASET…LDFNIEYRAV (123 aa). N-linked (GlcNAc...) asparagine glycosylation occurs at Asn-377.

Zn(2+) is required as a cofactor.

The protein resides in the secreted. Metalloprotease. The sequence is that of Zinc metalloproteinase nas-27 (nas-27) from Caenorhabditis elegans.